A 99-amino-acid polypeptide reads, in one-letter code: Photosystem II reaction center Psb28 protein (99 aa).

The protein belongs to the Psb28 family. Part of the photosystem II complex.

The protein localises to the cell inner membrane. In Gloeobacter violaceus (strain ATCC 29082 / PCC 7421), this protein is Photosystem II reaction center Psb28 protein.